Reading from the N-terminus, the 242-residue chain is Caffeoyl-CoA O-methyltransferase 2 (242 aa).

Lys16 is a binding site for substrate. S-adenosyl-L-methionine contacts are provided by residues Thr58, Glu80, 82–83 (GV), Ser88, Asp106, and Ala135. Asp158 lines the substrate pocket. Asp158 contacts a divalent metal cation. Asp160 provides a ligand contact to S-adenosyl-L-methionine. Positions 184 and 185 each coordinate a divalent metal cation. Substrate is bound at residue Asn189.

This sequence belongs to the class I-like SAM-binding methyltransferase superfamily. Cation-dependent O-methyltransferase family. CCoAMT subfamily. Mg(2+) is required as a cofactor. As to expression, mostly expressed in the bottom and middle parts of the stems.

The catalysed reaction is (E)-caffeoyl-CoA + S-adenosyl-L-methionine = (E)-feruloyl-CoA + S-adenosyl-L-homocysteine + H(+). The protein operates within aromatic compound metabolism; phenylpropanoid biosynthesis. Functionally, methylates caffeoyl-CoA to feruloyl-CoA and 5-hydroxyferuloyl-CoA to sinapoyl-CoA. Plays a role in the synthesis of feruloylated polysaccharides. Involved in the reinforcement of the plant cell wall. Also involved in the responding to wounding or pathogen challenge by the increased formation of cell wall-bound ferulic acid polymers. Methylates 5-hydroxyferulolyl-CoA more efficiently than caffeoyl-CoA. This Nicotiana tabacum (Common tobacco) protein is Caffeoyl-CoA O-methyltransferase 2 (CCOAOMT2).